We begin with the raw amino-acid sequence, 123 residues long: Large ribosomal subunit protein bL12 (123 aa).

It belongs to the bacterial ribosomal protein bL12 family. As to quaternary structure, homodimer. Part of the ribosomal stalk of the 50S ribosomal subunit. Forms a multimeric L10(L12)X complex, where L10 forms an elongated spine to which 2 to 4 L12 dimers bind in a sequential fashion. Binds GTP-bound translation factors.

Its function is as follows. Forms part of the ribosomal stalk which helps the ribosome interact with GTP-bound translation factors. Is thus essential for accurate translation. This is Large ribosomal subunit protein bL12 from Rickettsia bellii (strain OSU 85-389).